The primary structure comprises 888 residues: Leucine--tRNA ligase (888 aa).

The short motif at 43–53 (PYPSGRIHMGH) is the 'HIGH' region element. A 'KMSKS' region motif is present at residues 644–648 (KMSKS). Residue Lys647 coordinates ATP.

The protein belongs to the class-I aminoacyl-tRNA synthetase family.

It localises to the cytoplasm. The catalysed reaction is tRNA(Leu) + L-leucine + ATP = L-leucyl-tRNA(Leu) + AMP + diphosphate. The sequence is that of Leucine--tRNA ligase from Rhodopseudomonas palustris (strain BisA53).